Here is a 178-residue protein sequence, read N- to C-terminus: Ribose 1,5-bisphosphate phosphokinase PhnN (178 aa).

An ATP-binding site is contributed by 9–16 (GPSGSGKD).

It belongs to the ribose 1,5-bisphosphokinase family.

The enzyme catalyses alpha-D-ribose 1,5-bisphosphate + ATP = 5-phospho-alpha-D-ribose 1-diphosphate + ADP. It participates in metabolic intermediate biosynthesis; 5-phospho-alpha-D-ribose 1-diphosphate biosynthesis; 5-phospho-alpha-D-ribose 1-diphosphate from D-ribose 5-phosphate (route II): step 3/3. Its function is as follows. Catalyzes the phosphorylation of ribose 1,5-bisphosphate to 5-phospho-D-ribosyl alpha-1-diphosphate (PRPP). This is Ribose 1,5-bisphosphate phosphokinase PhnN from Pantoea vagans (strain C9-1) (Pantoea agglomerans (strain C9-1)).